A 219-amino-acid chain; its full sequence is Virginiamycin A acetyltransferase (219 aa).

Residue His-87 is part of the active site.

Belongs to the transferase hexapeptide repeat family.

In terms of biological role, inactivates the A compounds of virginiamycin-like antibiotics, thus providing resistance to these antibiotics. This Staphylococcus aureus protein is Virginiamycin A acetyltransferase (vat).